The sequence spans 142 residues: RNA polymerase-binding transcription factor DksA (142 aa).

Disordered stretches follow at residues 1–20 (MQTA…EDEP), 51–70 (HLQK…SSET), and 119–142 (RPTA…HRDD). The dksA C4-type zinc-finger motif lies at 104-128 (CEETGEPIGLARLEARPTATMSVEA). Basic and acidic residues predominate over residues 128 to 142 (AQERHERRERVHRDD).

This sequence belongs to the DksA family. Interacts directly with the RNA polymerase.

The protein resides in the cytoplasm. Its function is as follows. Transcription factor that acts by binding directly to the RNA polymerase (RNAP). Required for negative regulation of rRNA expression and positive regulation of several amino acid biosynthesis promoters. The chain is RNA polymerase-binding transcription factor DksA from Caulobacter vibrioides (strain ATCC 19089 / CIP 103742 / CB 15) (Caulobacter crescentus).